A 182-amino-acid polypeptide reads, in one-letter code: Isopentenyl-diphosphate Delta-isomerase (182 aa).

Positions 25 and 32 each coordinate Mn(2+). A Nudix hydrolase domain is found at 30 to 164 (RLHLAFSSWL…PWAFSPWMVM (135 aa)). The active site involves C67. C67 contributes to the Mg(2+) binding site. H69 serves as a coordination point for Mn(2+). Mg(2+) is bound at residue E87. Mn(2+) is bound by residues E114 and E116. E116 is a catalytic residue.

Belongs to the IPP isomerase type 1 family. Homodimer. Mg(2+) serves as cofactor. It depends on Mn(2+) as a cofactor.

It is found in the cytoplasm. It catalyses the reaction isopentenyl diphosphate = dimethylallyl diphosphate. Its pathway is isoprenoid biosynthesis; dimethylallyl diphosphate biosynthesis; dimethylallyl diphosphate from isopentenyl diphosphate: step 1/1. Functionally, catalyzes the 1,3-allylic rearrangement of the homoallylic substrate isopentenyl (IPP) to its highly electrophilic allylic isomer, dimethylallyl diphosphate (DMAPP). The chain is Isopentenyl-diphosphate Delta-isomerase from Shigella dysenteriae serotype 1 (strain Sd197).